We begin with the raw amino-acid sequence, 311 residues long: GTP cyclohydrolase MptA (311 aa).

This sequence belongs to the GTP cyclohydrolase IV family. Homodimer. It depends on Fe(2+) as a cofactor.

It catalyses the reaction GTP + H2O = 7,8-dihydroneopterin 2',3'-cyclic phosphate + formate + diphosphate + H(+). The protein operates within cofactor biosynthesis; 5,6,7,8-tetrahydromethanopterin biosynthesis. Converts GTP to 7,8-dihydro-D-neopterin 2',3'-cyclic phosphate, the first intermediate in the biosynthesis of coenzyme methanopterin. This Methanocorpusculum labreanum (strain ATCC 43576 / DSM 4855 / Z) protein is GTP cyclohydrolase MptA.